The following is a 315-amino-acid chain: Methionyl-tRNA formyltransferase (315 aa).

(6S)-5,6,7,8-tetrahydrofolate is bound at residue S113–P116.

The protein belongs to the Fmt family.

The enzyme catalyses L-methionyl-tRNA(fMet) + (6R)-10-formyltetrahydrofolate = N-formyl-L-methionyl-tRNA(fMet) + (6S)-5,6,7,8-tetrahydrofolate + H(+). Functionally, attaches a formyl group to the free amino group of methionyl-tRNA(fMet). The formyl group appears to play a dual role in the initiator identity of N-formylmethionyl-tRNA by promoting its recognition by IF2 and preventing the misappropriation of this tRNA by the elongation apparatus. The chain is Methionyl-tRNA formyltransferase from Escherichia coli O139:H28 (strain E24377A / ETEC).